The chain runs to 278 residues: 4-deoxy-L-threo-5-hexosulose-uronate ketol-isomerase (278 aa).

Zn(2+) contacts are provided by His-196, His-198, Glu-203, and His-245.

This sequence belongs to the KduI family. Requires Zn(2+) as cofactor.

It carries out the reaction 5-dehydro-4-deoxy-D-glucuronate = 3-deoxy-D-glycero-2,5-hexodiulosonate. It participates in glycan metabolism; pectin degradation; 2-dehydro-3-deoxy-D-gluconate from pectin: step 4/5. In terms of biological role, catalyzes the isomerization of 5-dehydro-4-deoxy-D-glucuronate to 3-deoxy-D-glycero-2,5-hexodiulosonate. The sequence is that of 4-deoxy-L-threo-5-hexosulose-uronate ketol-isomerase from Pectobacterium carotovorum subsp. carotovorum (Erwinia carotovora subsp. carotovora).